The following is a 487-amino-acid chain: WRKY transcription factor 1 (487 aa).

Residues 69–104 (QSEVDVASPVSEKAPKVSESSGALSLQSGSEGNSPF) form a disordered region. Serine 76 is subject to Phosphoserine. The span at 86 to 101 (SESSGALSLQSGSEGN) shows a compositional bias: polar residues. Positions 105–169 (IREKVMEDGY…YFGEHDHPKP (65 aa)) form a DNA-binding region, WRKY 1. Zn(2+)-binding residues include cysteine 136, cysteine 141, histidine 164, and histidine 166. The disordered stretch occupies residues 255 to 287 (SSRITGDNTHKDYNSPTAKRRKKGGNIELSPVE). The Nuclear localization signal signature appears at 273-277 (KRRKK). Residues 301–366 (TLFDIVNDGY…YEGKHDHDMP (66 aa)) constitute a DNA-binding region (WRKY 2). Zn(2+)-binding residues include cysteine 332, cysteine 337, histidine 361, and histidine 363. The tract at residues 380–487 (EVDDKEGDAN…QKPKTEPAQS (108 aa)) is disordered. Positions 390–401 (KTPQSSTLQSIT) are enriched in polar residues. Basic and acidic residues-rich tracts occupy residues 429 to 462 (LDEK…DDKT) and 476 to 487 (EEQKPKTEPAQS).

The protein belongs to the WRKY group I family. In terms of tissue distribution, expressed to similar levels in root and flower, to a somewhat lower level in stem and to low levels in leaf and siliques.

The protein resides in the nucleus. Its function is as follows. Transcription factor. Binds to a 5'-CGTTGACCGAG-3' consensus core sequence which contains a W box, a frequently occurring elicitor-responsive cis-acting element. The chain is WRKY transcription factor 1 from Arabidopsis thaliana (Mouse-ear cress).